A 253-amino-acid chain; its full sequence is Ubiquinone/menaquinone biosynthesis C-methyltransferase UbiE (253 aa).

S-adenosyl-L-methionine is bound by residues Thr-76, Asp-97, 125–126 (NA), and Ser-142.

This sequence belongs to the class I-like SAM-binding methyltransferase superfamily. MenG/UbiE family.

It catalyses the reaction a 2-demethylmenaquinol + S-adenosyl-L-methionine = a menaquinol + S-adenosyl-L-homocysteine + H(+). The catalysed reaction is a 2-methoxy-6-(all-trans-polyprenyl)benzene-1,4-diol + S-adenosyl-L-methionine = a 5-methoxy-2-methyl-3-(all-trans-polyprenyl)benzene-1,4-diol + S-adenosyl-L-homocysteine + H(+). It functions in the pathway quinol/quinone metabolism; menaquinone biosynthesis; menaquinol from 1,4-dihydroxy-2-naphthoate: step 2/2. The protein operates within cofactor biosynthesis; ubiquinone biosynthesis. Functionally, methyltransferase required for the conversion of demethylmenaquinol (DMKH2) to menaquinol (MKH2) and the conversion of 2-polyprenyl-6-methoxy-1,4-benzoquinol (DDMQH2) to 2-polyprenyl-3-methyl-6-methoxy-1,4-benzoquinol (DMQH2). The protein is Ubiquinone/menaquinone biosynthesis C-methyltransferase UbiE of Xanthomonas axonopodis pv. citri (strain 306).